A 283-amino-acid chain; its full sequence is Polyamine aminopropyltransferase (283 aa).

The PABS domain occupies Glu2 to Lys237. Gln31 is a binding site for S-methyl-5'-thioadenosine. The spermidine site is built by His62 and Asp86. S-methyl-5'-thioadenosine is bound by residues Glu106 and Asp137 to Gly138. Catalysis depends on Asp155, which acts as the Proton acceptor. Asp155–Asp158 is a spermidine binding site. Position 162 (Pro162) interacts with S-methyl-5'-thioadenosine.

The protein belongs to the spermidine/spermine synthase family. As to quaternary structure, homodimer or homotetramer.

The protein resides in the cytoplasm. It carries out the reaction S-adenosyl 3-(methylsulfanyl)propylamine + putrescine = S-methyl-5'-thioadenosine + spermidine + H(+). It functions in the pathway amine and polyamine biosynthesis; spermidine biosynthesis; spermidine from putrescine: step 1/1. In terms of biological role, catalyzes the irreversible transfer of a propylamine group from the amino donor S-adenosylmethioninamine (decarboxy-AdoMet) to putrescine (1,4-diaminobutane) to yield spermidine. In Clostridium perfringens (strain SM101 / Type A), this protein is Polyamine aminopropyltransferase.